Consider the following 99-residue polypeptide: Nucleoid-associated protein SSU98_0195 (99 aa).

This sequence belongs to the YbaB/EbfC family. Homodimer.

The protein localises to the cytoplasm. It localises to the nucleoid. Binds to DNA and alters its conformation. May be involved in regulation of gene expression, nucleoid organization and DNA protection. In Streptococcus suis (strain 98HAH33), this protein is Nucleoid-associated protein SSU98_0195.